Here is a 216-residue protein sequence, read N- to C-terminus: Transcriptional regulatory protein RcsB (216 aa).

Residues 5-124 (NVIIADDHPI…DLPKALAALQ (120 aa)) enclose the Response regulatory domain. Position 56 is a 4-aspartylphosphate (D56). Residues 144 to 209 (GGYGDKRLSP…ALLNYLSSVT (66 aa)) enclose the HTH luxR-type domain. Residues 168–187 (VTEIAKKLNRSIKTISSQKK) constitute a DNA-binding region (H-T-H motif).

The protein belongs to the RcsB family. In terms of assembly, interacts with RcsD and RcsA. Post-translationally, phosphorylated and activated by RcsD.

In terms of biological role, component of the Rcs signaling system, which controls transcription of numerous genes. RcsB is the response regulator that binds to regulatory DNA regions. Can function both in an RcsA-dependent or RcsA-independent manner. The sequence is that of Transcriptional regulatory protein RcsB from Escherichia coli O157:H7.